The following is a 97-amino-acid chain: Aspartyl/glutamyl-tRNA(Asn/Gln) amidotransferase subunit C (97 aa).

Belongs to the GatC family. As to quaternary structure, heterotrimer of A, B and C subunits.

It carries out the reaction L-glutamyl-tRNA(Gln) + L-glutamine + ATP + H2O = L-glutaminyl-tRNA(Gln) + L-glutamate + ADP + phosphate + H(+). The enzyme catalyses L-aspartyl-tRNA(Asn) + L-glutamine + ATP + H2O = L-asparaginyl-tRNA(Asn) + L-glutamate + ADP + phosphate + 2 H(+). Allows the formation of correctly charged Asn-tRNA(Asn) or Gln-tRNA(Gln) through the transamidation of misacylated Asp-tRNA(Asn) or Glu-tRNA(Gln) in organisms which lack either or both of asparaginyl-tRNA or glutaminyl-tRNA synthetases. The reaction takes place in the presence of glutamine and ATP through an activated phospho-Asp-tRNA(Asn) or phospho-Glu-tRNA(Gln). This Synechococcus sp. (strain CC9311) protein is Aspartyl/glutamyl-tRNA(Asn/Gln) amidotransferase subunit C.